The sequence spans 385 residues: Glucans biosynthesis protein C (385 aa).

The next 10 membrane-spanning stretches (helical) occupy residues 17–37 (AWLMLLGIPFHISLIYSSHTW), 60–80 (MLVFFVISGYFSYMLFLRYPL), 91–111 (VGIPMLTAIPLLTLPQFIMLQ), 137–157 (ISHLWFLLVLVVMTTLCVWIF), 173–193 (KFSMVKLSVIFLCLGIGYAVI), 212–232 (FIVMQTLFYLPFFILGALAFI), 239–259 (LFTTPSRGCTLAAALAFVAYL), 274–294 (TESVITMVLGLWMVNVVFSFG), 311–331 (ASLFIYLVHHPLTLFFGAYIT), and 338–358 (WLGFLCGLIFVVGIAIILYEI).

Belongs to the acyltransferase 3 family. OpgC subfamily.

It is found in the cell membrane. Its pathway is glycan metabolism; osmoregulated periplasmic glucan (OPG) biosynthesis. Its function is as follows. Necessary for the succinyl substitution of periplasmic glucans. Could catalyze the transfer of succinyl residues from the cytoplasmic side of the membrane to the nascent glucan backbones on the periplasmic side of the membrane. This Shigella boydii serotype 4 (strain Sb227) protein is Glucans biosynthesis protein C.